Reading from the N-terminus, the 474-residue chain is Cbb3-type cytochrome c oxidase subunit CcoN1 (474 aa).

Residues 1 to 16 lie on the Cytoplasmic side of the membrane; sequence MNTATSTAYSYKVVRQ. Residues 17–37 form a helical membrane-spanning segment; sequence FAIMTVVWGIVGMGLGVFIAA. Over 38-60 the chain is Periplasmic; the sequence is QLAWPFLNFDLPWTSFGRLRPLH. Residue H60 coordinates heme b. A helical transmembrane segment spans residues 61 to 81; that stretch reads TNAVIFAFGGCALFATSYYSV. The Cytoplasmic portion of the chain corresponds to 82–96; the sequence is QRTCQTTLFAPKLAA. The helical transmembrane segment at 97-117 threads the bilayer; that stretch reads FTFWGWQLVILLAAISLPLGF. Residues 118-129 are Periplasmic-facing; it reads TSSKEYAELEWP. Residues 130 to 150 form a helical membrane-spanning segment; sequence IDILITIVWVAYAVVFFGTLA. Topologically, residues 151–156 are cytoplasmic; that stretch reads KRKVKH. Residues 157 to 177 form a helical membrane-spanning segment; that stretch reads IYVGNWFFGAFILTVAILHVV. Residues 178–205 are Periplasmic-facing; the sequence is NNLEIPVTAMKSYSLYAGATDAMVQWWY. Residues 206-226 form a helical membrane-spanning segment; the sequence is GHNAVGFFLTAGFLGIMYYFV. H207 is a Cu cation binding site. Residues 227–238 lie on the Cytoplasmic side of the membrane; that stretch reads PKQAERPVYSYR. The helical transmembrane segment at 239 to 259 threads the bilayer; it reads LSIVHFWALITVYIWAGPHHL. 2 residues coordinate Cu cation: H257 and H258. Topologically, residues 260 to 270 are periplasmic; it reads HYTALPDWAQS. A helical transmembrane segment spans residues 271-291; that stretch reads LGMVMSLILLAPSWGGMINGM. Over 292 to 308 the chain is Cytoplasmic; the sequence is MTLSGAWHKLRSDPILR. The helical transmembrane segment at 309–329 threads the bilayer; it reads FLVVSLAFYGMSTFEGPMMAI. At 330-345 the chain is on the periplasmic side; it reads KTVNALSHYTDWTIGH. Residues H345 and H347 each coordinate heme b. Residues 346 to 366 form a helical membrane-spanning segment; sequence VHAGALGWVAMVSIGALYHLV. The Cytoplasmic segment spans residues 367–384; the sequence is PKVFGREQMHSIGLINTH. The chain crosses the membrane as a helical span at residues 385–405; sequence FWLATIGTVLYIASMWVNGIA. Over 406-432 the chain is Periplasmic; the sequence is QGLMWRAINDDGTLTYSFVESLEASHP. A helical membrane pass occupies residues 433–453; that stretch reads GFVVRMIGGAIFFAGMLVMAY. Residues 454–474 are Cytoplasmic-facing; the sequence is NTWRTVQAAKPAEYDAAAQIA.

It belongs to the heme-copper respiratory oxidase family. As to quaternary structure, component of the cbb3-type cytochrome c oxidase at least composed of CcoN, CcoO, CcoQ and CcoP. The cofactor is Cu(2+). Heme b is required as a cofactor.

It localises to the cell inner membrane. It carries out the reaction 4 Fe(II)-[cytochrome c] + O2 + 8 H(+)(in) = 4 Fe(III)-[cytochrome c] + 2 H2O + 4 H(+)(out). The protein operates within energy metabolism; oxidative phosphorylation. Functionally, cbb3-type cytochrome c oxidase is the component of the respiratory chain that catalyzes the reduction of oxygen to water. Subunits CcoN and CcoO form the functional core of the enzyme complex. Subunits CcoP and CcoQ may optionally bind to the core. CcoN is the catalytic subunit of the enzyme. Electrons originating in cytochrome c or a quinol are transferred to the bimetallic center formed by a high-spin heme and copper B. The complex also functions as a proton pump. The chain is Cbb3-type cytochrome c oxidase subunit CcoN1 from Stutzerimonas stutzeri (Pseudomonas stutzeri).